The following is a 129-amino-acid chain: Iron-sulfur cluster assembly 1 homolog, mitochondrial (129 aa).

A mitochondrion-targeting transit peptide spans M1 to A12. Residues C57, C121, and C123 each contribute to the Fe cation site.

It belongs to the HesB/IscA family. As to quaternary structure, interacts with CRY2, but not with CRY1 (in vitro).

Its subcellular location is the mitochondrion. In terms of biological role, involved in the maturation of mitochondrial 4Fe-4S proteins functioning late in the iron-sulfur cluster assembly pathway. Probably involved in the binding of an intermediate of Fe/S cluster assembly. In Bos taurus (Bovine), this protein is Iron-sulfur cluster assembly 1 homolog, mitochondrial (ISCA1).